We begin with the raw amino-acid sequence, 92 residues long: Small ribosomal subunit protein uS19 (92 aa).

It belongs to the universal ribosomal protein uS19 family.

Its function is as follows. Protein S19 forms a complex with S13 that binds strongly to the 16S ribosomal RNA. This is Small ribosomal subunit protein uS19 from Magnetococcus marinus (strain ATCC BAA-1437 / JCM 17883 / MC-1).